The chain runs to 870 residues: Leucine--tRNA ligase (870 aa).

The short motif at 43–53 is the 'HIGH' region element; that stretch reads PYPSGRIHMGH. Residues 630–634 carry the 'KMSKS' region motif; sequence KMSKS. Lys-633 is a binding site for ATP.

This sequence belongs to the class-I aminoacyl-tRNA synthetase family.

Its subcellular location is the cytoplasm. The catalysed reaction is tRNA(Leu) + L-leucine + ATP = L-leucyl-tRNA(Leu) + AMP + diphosphate. This Parvibaculum lavamentivorans (strain DS-1 / DSM 13023 / NCIMB 13966) protein is Leucine--tRNA ligase.